Consider the following 1202-residue polypeptide: Putative late blight resistance protein homolog R1B-8 (1202 aa).

Coiled-coil stretches lie at residues 345-368 and 437-459; these read RYSDSLAFLKNQLQVIQTEFESLQ and LRMNEEIVGFEDVIEKLRNRLLN. The NB-ARC domain occupies 426 to 741; the sequence is IARTSSQLAR…ISESFIKSCE (316 aa). 471-478 is an ATP binding site; sequence GMPGLGKT. LRR repeat units lie at residues 865-889, 908-936, 1011-1036, 1040-1059, 1060-1084, 1086-1111, and 1128-1151; these read FKFLKVLDLEHQVIIDFIPTELFYL, LWNLETLILKSRSASKHNRVLLPSTVWDM, PIRLEILKLYNRSKAFKTIPFCISAP, YLKLSRFYLDSQYLSETADH, LKHLEVLKLSCVEFGDHGEWEVSNG, FPQLKILKLEYVSLMKWIVADDVFPN, and SCFMDILSLKYIKVDEYSESVVQS.

Belongs to the disease resistance NB-LRR family.

Its subcellular location is the cytoplasm. The protein resides in the membrane. In terms of biological role, confers resistance to late blight (Phytophthora infestans) races carrying the avirulence gene Avr1. Resistance proteins guard the plant against pathogens that contain an appropriate avirulence protein via an indirect interaction with this avirulence protein. That triggers a defense system including the hypersensitive response, which restricts the pathogen growth. In Solanum demissum (Wild potato), this protein is Putative late blight resistance protein homolog R1B-8 (R1B-8).